Reading from the N-terminus, the 689-residue chain is Small ribosomal subunit protein mS39 (689 aa).

The transit peptide at 1–37 (MAVVSAVRWLGLRSRLGQPLTGRRAGLCEQARSCRFY) directs the protein to the mitochondrion. K126 bears the N6-acetyllysine mark. 10 PPR repeats span residues 149-183 (IKDI…GTTV), 184-219 (SLET…EALE), 255-289 (NEHS…RLHA), 290-330 (DVYT…KVKP), 331-367 (NLQT…GIEP), 368-409 (SLAT…SPKD), 412-446 (DDKF…DNWK), 454-488 (RNFY…AYFP), 489-523 (HSQT…GHTF), and 572-606 (PATS…NKIP). Residues 665 to 689 (NLTALTSDSDTDSSSDSDSDTSEGK) are disordered. A compositionally biased stretch (acidic residues) spans 673-689 (SDTDSSSDSDSDTSEGK).

It belongs to the mitochondrion-specific ribosomal protein mS39 family. As to quaternary structure, component of the mitochondrial small ribosomal subunit (mt-SSU). Mature mammalian 55S mitochondrial ribosomes consist of a small (28S) and a large (39S) subunit. The 28S small subunit contains a 12S ribosomal RNA (12S mt-rRNA) and 30 different proteins. The 39S large subunit contains a 16S rRNA (16S mt-rRNA), a copy of mitochondrial valine transfer RNA (mt-tRNA(Val)), which plays an integral structural role, and 52 different proteins. Associated with the 12S mitochondrial rRNA (12S mt-rRNA). As to expression, abundant in testes, skeletal muscle and heart tissue.

Its subcellular location is the mitochondrion. Its function is as follows. Mitochondrial RNA-binding protein that has a role in mitochondrial translation. In Homo sapiens (Human), this protein is Small ribosomal subunit protein mS39 (PTCD3).